Here is a 117-residue protein sequence, read N- to C-terminus: Protein P16 (117 aa).

The helical transmembrane segment at 7 to 24 (LYWVGGGLVLILIWLWFR) threads the bilayer.

The protein resides in the virion membrane. Its function is as follows. Protein of the infection vertex complex, which increases the vertex stability. Anchors the vertex structure to the viral membrane. Essential for viral infectivity. In Enterobacteria phage PRD1 (Bacteriophage PRD1), this protein is Protein P16 (XVI).